Consider the following 137-residue polypeptide: Flavodoxin (137 aa).

The 136-residue stretch at 2–137 folds into the Flavodoxin-like domain; the sequence is VEIVYWSGTG…KELGEAAAKA (136 aa).

The protein belongs to the flavodoxin family. FMN is required as a cofactor.

Low-potential electron donor to a number of redox enzymes. This Megasphaera elsdenii protein is Flavodoxin.